Reading from the N-terminus, the 298-residue chain is Lipoyl synthase (298 aa).

[4Fe-4S] cluster-binding residues include Cys-40, Cys-45, Cys-51, Cys-67, Cys-71, Cys-74, and Ser-280. The Radical SAM core domain occupies 53–269 (AVRKTATFMI…KEIALSKGFS (217 aa)).

This sequence belongs to the radical SAM superfamily. Lipoyl synthase family. The cofactor is [4Fe-4S] cluster.

It is found in the cytoplasm. The enzyme catalyses [[Fe-S] cluster scaffold protein carrying a second [4Fe-4S](2+) cluster] + N(6)-octanoyl-L-lysyl-[protein] + 2 oxidized [2Fe-2S]-[ferredoxin] + 2 S-adenosyl-L-methionine + 4 H(+) = [[Fe-S] cluster scaffold protein] + N(6)-[(R)-dihydrolipoyl]-L-lysyl-[protein] + 4 Fe(3+) + 2 hydrogen sulfide + 2 5'-deoxyadenosine + 2 L-methionine + 2 reduced [2Fe-2S]-[ferredoxin]. The protein operates within protein modification; protein lipoylation via endogenous pathway; protein N(6)-(lipoyl)lysine from octanoyl-[acyl-carrier-protein]. Its function is as follows. Catalyzes the radical-mediated insertion of two sulfur atoms into the C-6 and C-8 positions of the octanoyl moiety bound to the lipoyl domains of lipoate-dependent enzymes, thereby converting the octanoylated domains into lipoylated derivatives. The chain is Lipoyl synthase from Bacillus thuringiensis (strain Al Hakam).